The sequence spans 165 residues: Nicotine 6-hydroxylase small subunit (165 aa).

In terms of domain architecture, 2Fe-2S ferredoxin-type spans 10–86 (VEIDVEVNGR…GRSIRTVEDL (77 aa)). [2Fe-2S] cluster contacts are provided by Cys48, Cys53, Cys56, and Cys68.

In terms of assembly, heterotrimer composed of a large subunit (NdhL), a medium subunit (NdhM) and a small subunit (NdhS). The cofactor is [2Fe-2S] cluster.

The protein localises to the cytoplasm. It carries out the reaction (R)-nicotine + A + H2O = (R)-6-hydroxynicotine + AH2. It catalyses the reaction (S)-nicotine + A + H2O = (S)-6-hydroxynicotine + AH2. The protein operates within alkaloid degradation; nicotine degradation; 6-hydroxypseudooxynicotine from nicotine (R-isomer route): step 1/2. It participates in alkaloid degradation; nicotine degradation; 6-hydroxypseudooxynicotine from nicotine (S-isomer route): step 1/2. With respect to regulation, nicotine dehydrogenase activity is inhibited by tungsten. Functionally, component of the nicotine 6-hydroxylase, which is involved in the degradation of nicotine. Catalyzes the hydroxylation of the pyridine ring at C6 to form 6-hydroxynicotine. Can use both L-nicotine and D-nicotine. This is Nicotine 6-hydroxylase small subunit from Paenarthrobacter nicotinovorans (Arthrobacter nicotinovorans).